The chain runs to 1507 residues: MTTVVVHVDSKAELTTLLEQWEKEHGSGQDMVPILTRMSQLIEKETEEYRKGDPDPFDDRHPGRADPECMLGHLLRILFKNDDFMNALVNAYVMTSREPPLNTAACRLLLDIMPGLETAVVFQEKEGIVENLFKWAREADQPLRTYSTGLLGGAMENQDIAANYRDENSQLVAIVLRRLRELQLQEVALRQENKRPSPRKLSSEPLLPLDEEAVDMDYGDMAVDVVDGDQEEASGDMEISFHLDSGHKTSSRVNSTTKPEDGGLKKNKSAKQGDRENFRKAKQKLGFSSSDPDRMFVELSNSSWSEMSPWVIGTNYTLYPMTPAIEQRLILQYLTPLGEYQELLPIFMQLGSRELMMFYIDLKQTNDVLLTFEALKHLASLLLHNKFATEFVAHGGVQKLLEIPRPSMAATGVSMCLYYLSYNQDAMERVCMHPHNVLSDVVNYTLWLMECSHASGCCHATMFFSICFSFRAVLELFDRYDGLRRLVNLISTLEILNLEDQGALLSDDEIFASRQTGKHTCMALRKYFEAHLAIKLEQVKQSLQRTEGGILVHPQPPYKACSYTHEQIVEMMEFLIEYGPAQLYWEPAEVFLKLSCVQLLLQLISIACNWKTYYARNDTVRFALDVLAILTVVPKIQLQLAESVDVLDEAGSTVSTVGISIILGVAEGEFFIHDAEIQKSALQIIINCVCGPDNRISSIGKFISGTPRRKLPQNPKSSEHTLAKMWNVVQSNNGIKVLLSLLSIKMPITDADQIRALACKALVGLSRSSTVRQIISKLPLFSSCQIQQLMKEPVLQDKRSDHVKFCKYAAELIERVSGKPLLIGTDVSLARLQKADVVAQSRISFPEKELLLLIRNHLISKGLGETATVLTKEADLPMTAASHSSAFTPVTAAASPVSLPRTPRIANGIATRLGSHAAVGASAPSAPTAHPQPRPPQGPLALPGPSYAGNSPLIGRISFIRERPSPCNGRKIRVLRQKSDHGAYSQSPAIKKQLDRHLPSPPTLDSIITEYLREQHARCKNPVATCPPFSLFTPHQCPEPKQRRQAPINFTSRLNRRASFPKYGGVDGGCFDRHLIFSRFRPISVFREANEDESGFTCCAFSARERFLMLGTCTGQLKLYNVFSGQEEASYNCHNSAITHLEPSRDGSLLLTSATWSQPLSALWGMKSVFDMKHSFTEDHYVEFSKHSQDRVIGTKGDIAHIYDIQTGNKLLTLFNPDLANNYKRNCATFNPTDDLVLNDGVLWDVRSAQAIHKFDKFNMNISGVFHPNGLEVIINTEIWDLRTFHLLHTVPALDQCRVVFNHTGTVMYGAMLQADDEDDLMEERMKSPFGSSFRTFNATDYKPIATIDVKRNIFDLCTDTKDCYLAVIENQGSMDALNMDTVCRLYEVGRQRLAEDEDEEEDQEEEEQEEEDDDEDDDDTDDLDELDTDQLLEAELEEDDNNENAGEDGDNDFSPSDEELANLLEEGEDGEDEDSDADEEVELILGDTDSSDNSDLEDDIILSLNE.

The segment at 141 to 500 (QPLRTYSTGL…STLEILNLED (360 aa)) is protein kinase-like. Serine 202 and serine 255 each carry phosphoserine. Positions 242 to 288 (HLDSGHKTSSRVNSTTKPEDGGLKKNKSAKQGDRENFRKAKQKLGFS) are disordered. A Chromo domain is found at 562–593 (SYTHEQIVEMMEFLIEYGPAQLYWEPAEVFLK). Lysine 701 bears the N6-acetyllysine mark. Phosphoserine is present on serine 828. The region spanning 846–878 (PEKELLLLIRNHLISKGLGETATVLTKEADLPM) is the LisH domain. Residue threonine 888 is modified to Phosphothreonine. 2 positions are modified to phosphoserine: serine 895 and serine 898. Residues 917-947 (AAVGASAPSAPTAHPQPRPPQGPLALPGPSY) are disordered. Residues serine 979 and serine 1000 each carry the phosphoserine modification. WD repeat units follow at residues 1091 to 1130 (EDES…EEAS), 1133 to 1174 (CHNS…DMKH), 1176 to 1213 (FTED…KLLT), 1215 to 1247 (FNPD…WDVR), and 1248 to 1290 (SAQA…LLHT). Residues 1091-1290 (EDESGFTCCA…DLRTFHLLHT (200 aa)) are WD repeat-like region. Short sequence motifs (DWD box) lie at residues 1242-1249 (VLWDVRSA) and 1278-1285 (EIWDLRTF). Serine 1328 carries the phosphoserine modification. Positions 1393-1507 (RLAEDEDEEE…EDDIILSLNE (115 aa)) are disordered. Composition is skewed to acidic residues over residues 1396–1483 (EDED…EEVE) and 1490–1501 (DSSDNSDLEDDI). An interaction with NF2 region spans residues 1418–1507 (DDDTDDLDEL…EDDIILSLNE (90 aa)).

Belongs to the VPRBP/DCAF1 family. In terms of assembly, component of the DCX (DDB1-CUL4-X-box) E3 ubiquitin-protein ligase complex, named CUL4A-RBX1-DDB1-DCAF1/VPRBP complex. Interacts with DDB1; the interaction is direct. Also forms a ternary complex with DDA1 and DDB1. Interacts with NF2 (via FERM domain). Component of the EDVP complex, a E3 ligase complex containing DYRK2, EDD/UBR5, DDB1 and DCAF1. Interacts with DYRK2; the interaction is direct. Interacts with RAG1; the interaction is direct. Interacts with LLGL1 and LLGL2. Interacts with histone H3. Interacts with ESR1 and LATS1; probably recruited by LATS1 to promote ESR1 ubiquitination and ubiquitin-mediated proteasomal degradation. Directly interacts with TET1, TET2 and TET3 (via C-terminus). Interacts with CEP78; promoting DCAF1 localization to centrosomes. (Microbial infection) Interacts with HIV-1 virus Vpr protein; the interaction is direct. As to quaternary structure, (Microbial infection) Interacts with HIV-2 virus Vpx protein; the interaction is direct and the complex recruits SAMHD1 to promote its ubiquitin-dependent proteasomal degradation. In terms of assembly, (Microbial infection) Interacts (via C-terminus) with human cytomegalovirus protein UL35; this interaction induces the accumulation of cells in the G2 phase of the cell cycle. Ubiquitously expressed.

The protein localises to the cytoplasm. The protein resides in the nucleus. It localises to the cytoskeleton. It is found in the microtubule organizing center. Its subcellular location is the centrosome. It catalyses the reaction L-seryl-[protein] + ATP = O-phospho-L-seryl-[protein] + ADP + H(+). The enzyme catalyses L-threonyl-[protein] + ATP = O-phospho-L-threonyl-[protein] + ADP + H(+). It participates in protein modification; protein ubiquitination. Functionally, acts both as a substrate recognition component of E3 ubiquitin-protein ligase complexes and as an atypical serine/threonine-protein kinase, playing key roles in various processes such as cell cycle, telomerase regulation and histone modification. Probable substrate-specific adapter of a DCX (DDB1-CUL4-X-box) E3 ubiquitin-protein ligase complex, named CUL4A-RBX1-DDB1-DCAF1/VPRBP complex, which mediates ubiquitination and proteasome-dependent degradation of proteins such as NF2. Involved in the turnover of methylated proteins: recognizes and binds methylated proteins via its chromo domain, leading to ubiquitination of target proteins by the RBX1-DDB1-DCAF1/VPRBP complex. The CUL4A-RBX1-DDB1-DCAF1/VPRBP complex is also involved in B-cell development: DCAF1 is recruited by RAG1 to ubiquitinate proteins, leading to limit error-prone repair during V(D)J recombination. Also part of the EDVP complex, an E3 ligase complex that mediates ubiquitination of proteins such as TERT, leading to TERT degradation and telomerase inhibition. The EDVP complex also mediates ubiquitination and degradation of CCP110. Also acts as an atypical serine/threonine-protein kinase that specifically mediates phosphorylation of 'Thr-120' of histone H2A (H2AT120ph) in a nucleosomal context, thereby repressing transcription. H2AT120ph is present in the regulatory region of many tumor suppresor genes, down-regulates their transcription and is present at high level in a number of tumors. Involved in JNK-mediated apoptosis during cell competition process via its interaction with LLGL1 and LLGL2. By acting on TET dioxygenses, essential for oocyte maintenance at the primordial follicle stage, hence essential for female fertility. In terms of biological role, (Microbial infection) In case of infection by HIV-1 virus, it is recruited by HIV-1 Vpr in order to hijack the CUL4A-RBX1-DDB1-DCAF1/VPRBP function leading to arrest the cell cycle in G2 phase, and also to protect the viral protein from proteasomal degradation by another E3 ubiquitin ligase. The HIV-1 Vpr protein hijacks the CUL4A-RBX1-DDB1-DCAF1/VPRBP complex to promote ubiquitination and degradation of proteins such as TERT and ZIP/ZGPAT. Its function is as follows. (Microbial infection) In case of infection by HIV-2 virus, it is recruited by HIV-2 Vpx in order to hijack the CUL4A-RBX1-DDB1-DCAF1/VPRBP function leading to enhanced efficiency of macrophage infection and promotion of the replication of cognate primate lentiviruses in cells of monocyte/macrophage lineage. The sequence is that of DDB1- and CUL4-associated factor 1 from Homo sapiens (Human).